A 307-amino-acid polypeptide reads, in one-letter code: Aspartate carbamoyltransferase catalytic subunit (307 aa).

Positions 54 and 55 each coordinate carbamoyl phosphate. K83 serves as a coordination point for L-aspartate. Residues R104, H132, and Q135 each contribute to the carbamoyl phosphate site. Residues R165 and R228 each contribute to the L-aspartate site. Carbamoyl phosphate is bound by residues L267 and P268.

The protein belongs to the aspartate/ornithine carbamoyltransferase superfamily. ATCase family. In terms of assembly, heterododecamer (2C3:3R2) of six catalytic PyrB chains organized as two trimers (C3), and six regulatory PyrI chains organized as three dimers (R2).

It carries out the reaction carbamoyl phosphate + L-aspartate = N-carbamoyl-L-aspartate + phosphate + H(+). It functions in the pathway pyrimidine metabolism; UMP biosynthesis via de novo pathway; (S)-dihydroorotate from bicarbonate: step 2/3. In terms of biological role, catalyzes the condensation of carbamoyl phosphate and aspartate to form carbamoyl aspartate and inorganic phosphate, the committed step in the de novo pyrimidine nucleotide biosynthesis pathway. This chain is Aspartate carbamoyltransferase catalytic subunit, found in Clostridium perfringens (strain 13 / Type A).